A 420-amino-acid polypeptide reads, in one-letter code: Ribulose bisphosphate carboxylase (420 aa).

Residue lysine 155 is the Proton acceptor of the active site. A substrate-binding site is contributed by lysine 157. Mg(2+)-binding residues include lysine 181, aspartate 183, and glutamate 184. N6-carboxylysine is present on lysine 181. Histidine 273 functions as the Proton acceptor in the catalytic mechanism. Substrate contacts are provided by residues arginine 274, histidine 306, 343 to 345, and 365 to 368; these read SGG and QAGG.

It belongs to the RuBisCO large chain family. Type III subfamily. Homodimer or homodecamer. In contrast to form I RuBisCO, the form III RuBisCO is composed solely of large subunits. It depends on Mg(2+) as a cofactor.

The enzyme catalyses 2 (2R)-3-phosphoglycerate + 2 H(+) = D-ribulose 1,5-bisphosphate + CO2 + H2O. It catalyses the reaction D-ribulose 1,5-bisphosphate + O2 = 2-phosphoglycolate + (2R)-3-phosphoglycerate + 2 H(+). Functionally, catalyzes the addition of molecular CO(2) and H(2)O to ribulose 1,5-bisphosphate (RuBP), generating two molecules of 3-phosphoglycerate (3-PGA). Functions in an archaeal AMP degradation pathway, together with AMP phosphorylase and R15P isomerase. In Pyrococcus furiosus (strain ATCC 43587 / DSM 3638 / JCM 8422 / Vc1), this protein is Ribulose bisphosphate carboxylase.